A 173-amino-acid polypeptide reads, in one-letter code: Photosystem I assembly protein Ycf3 (173 aa).

3 TPR repeats span residues 35-68 (AYVY…EESP), 72-105 (SETL…NSNQ), and 120-153 (GRTA…YPGG).

Belongs to the Ycf3 family.

It is found in the cellular thylakoid membrane. Its function is as follows. Essential for the assembly of the photosystem I (PSI) complex. May act as a chaperone-like factor to guide the assembly of the PSI subunits. This chain is Photosystem I assembly protein Ycf3, found in Prochlorococcus marinus (strain MIT 9313).